Reading from the N-terminus, the 198-residue chain is Glycerol-3-phosphate acyltransferase 2 (198 aa).

4 consecutive transmembrane segments (helical) span residues 4 to 24, 71 to 91, 113 to 133, and 147 to 167; these read TYLLFIVAYLLGSIPFALVVG, LPMVFGLDIHPLWFGLAAVLG, LLCYSPVVFAILAVVFFTLLF, and VVAVIASIVSGDKIFIIAMCL.

Belongs to the PlsY family. Probably interacts with PlsX.

It localises to the cell membrane. The enzyme catalyses an acyl phosphate + sn-glycerol 3-phosphate = a 1-acyl-sn-glycero-3-phosphate + phosphate. It participates in lipid metabolism; phospholipid metabolism. Functionally, catalyzes the transfer of an acyl group from acyl-phosphate (acyl-PO(4)) to glycerol-3-phosphate (G3P) to form lysophosphatidic acid (LPA). This enzyme utilizes acyl-phosphate as fatty acyl donor, but not acyl-CoA or acyl-ACP. The protein is Glycerol-3-phosphate acyltransferase 2 of Bacillus cereus (strain ZK / E33L).